The sequence spans 540 residues: Chaperonin GroEL (540 aa).

ATP contacts are provided by residues 30-33 (TLGP), K51, 87-91 (DGTTT), G415, and D495.

It belongs to the chaperonin (HSP60) family. Forms a cylinder of 14 subunits composed of two heptameric rings stacked back-to-back. Interacts with the co-chaperonin GroES.

The protein localises to the cytoplasm. It carries out the reaction ATP + H2O + a folded polypeptide = ADP + phosphate + an unfolded polypeptide.. Its function is as follows. Together with its co-chaperonin GroES, plays an essential role in assisting protein folding. The GroEL-GroES system forms a nano-cage that allows encapsulation of the non-native substrate proteins and provides a physical environment optimized to promote and accelerate protein folding. The sequence is that of Chaperonin GroEL from Rhodothermus marinus (Rhodothermus obamensis).